The chain runs to 337 residues: Inositol 2-dehydrogenase (337 aa).

This sequence belongs to the Gfo/Idh/MocA family. In terms of assembly, homotetramer.

It carries out the reaction myo-inositol + NAD(+) = scyllo-inosose + NADH + H(+). Its function is as follows. Involved in the oxidation of myo-inositol (MI) to 2-keto-myo-inositol (2KMI or 2-inosose). The polypeptide is Inositol 2-dehydrogenase (Arthrobacter sp. (strain FB24)).